The following is a 682-amino-acid chain: Potassium-transporting ATPase ATP-binding subunit (682 aa).

A run of 4 helical transmembrane segments spans residues 34–54, 62–82, 219–239, and 254–274; these read PVMF…IAMA, ALFS…ANFA, IALT…TATL, and VLVA…LSAI. Residue D307 is the 4-aspartylphosphate intermediate of the active site. ATP-binding positions include D344, E348, 377-384, and K395; that span reads FTAQSRMS. 2 residues coordinate Mg(2+): D518 and D522. The next 3 helical transmembrane spans lie at 588–608, 616–636, and 656–676; these read FAII…LNIM, AILS…PLAL, and IYGL…DLLL.

This sequence belongs to the cation transport ATPase (P-type) (TC 3.A.3) family. Type IA subfamily. As to quaternary structure, the system is composed of three essential subunits: KdpA, KdpB and KdpC.

The protein resides in the cell inner membrane. The enzyme catalyses K(+)(out) + ATP + H2O = K(+)(in) + ADP + phosphate + H(+). Functionally, part of the high-affinity ATP-driven potassium transport (or Kdp) system, which catalyzes the hydrolysis of ATP coupled with the electrogenic transport of potassium into the cytoplasm. This subunit is responsible for energy coupling to the transport system and for the release of the potassium ions to the cytoplasm. This Escherichia fergusonii (strain ATCC 35469 / DSM 13698 / CCUG 18766 / IAM 14443 / JCM 21226 / LMG 7866 / NBRC 102419 / NCTC 12128 / CDC 0568-73) protein is Potassium-transporting ATPase ATP-binding subunit.